A 344-amino-acid polypeptide reads, in one-letter code: Arginine N-succinyltransferase (344 aa).

Leucine 125 serves as a coordination point for succinyl-CoA. Residue histidine 229 is the Proton donor of the active site.

Belongs to the arginine N-succinyltransferase family.

The enzyme catalyses succinyl-CoA + L-arginine = N(2)-succinyl-L-arginine + CoA + H(+). It participates in amino-acid degradation; L-arginine degradation via AST pathway; L-glutamate and succinate from L-arginine: step 1/5. Its function is as follows. Catalyzes the transfer of succinyl-CoA to arginine to produce N(2)-succinylarginine. This Shigella boydii serotype 4 (strain Sb227) protein is Arginine N-succinyltransferase.